Here is a 181-residue protein sequence, read N- to C-terminus: MNFQEAWEKQPMSKPRIEKVTVNMGVGESGDKLLTAEKVVSEITGQKPVRTLAKQTNPAFNIRKKLPIGLKITLRGKKAEEFLKDAFTAFTASGKQLFTYSFDKRGNFSFGIPEHIDFPNQKYDPSVGIYGMDICVTFEKPGYSVKRRKAKRANIPAKHLVSKEEAINYIETIYGIKVEQE.

It belongs to the universal ribosomal protein uL5 family. As to quaternary structure, part of the 50S ribosomal subunit; contacts the 5S rRNA and probably tRNA. Forms a bridge to the 30S subunit in the 70S ribosome.

In terms of biological role, this is one of the proteins that bind and probably mediate the attachment of the 5S RNA into the large ribosomal subunit, where it forms part of the central protuberance. In the 70S ribosome it contacts protein S13 of the 30S subunit (bridge B1b), connecting the 2 subunits; this bridge is implicated in subunit movement. May contact the P site tRNA; the 5S rRNA and some of its associated proteins might help stabilize positioning of ribosome-bound tRNAs. This chain is Large ribosomal subunit protein uL5, found in Methanococcus aeolicus (strain ATCC BAA-1280 / DSM 17508 / OCM 812 / Nankai-3).